An 84-amino-acid chain; its full sequence is Extender of the chronological lifespan protein 2 (84 aa).

This sequence belongs to the ecl1 family.

Its subcellular location is the nucleus. Functionally, involved in chronological cell aging. The chain is Extender of the chronological lifespan protein 2 (ecl2) from Schizosaccharomyces pombe (strain 972 / ATCC 24843) (Fission yeast).